The sequence spans 148 residues: Ubiquitin-conjugating enzyme E2 8 (148 aa).

Positions 1 to 147 constitute a UBC core domain; the sequence is MASKRILKEL…ARNWTQKYAM (147 aa). The Glycyl thioester intermediate role is filled by Cys85.

Belongs to the ubiquitin-conjugating enzyme family. As to quaternary structure, interacts with CIP8, CHIP, NLA and XERICO. Highest expression in young stems, old leaves. Lowest levels in floral buds, anthers and young leaves.

The catalysed reaction is S-ubiquitinyl-[E1 ubiquitin-activating enzyme]-L-cysteine + [E2 ubiquitin-conjugating enzyme]-L-cysteine = [E1 ubiquitin-activating enzyme]-L-cysteine + S-ubiquitinyl-[E2 ubiquitin-conjugating enzyme]-L-cysteine.. It participates in protein modification; protein ubiquitination. Accepts the ubiquitin from the E1 complex and catalyzes its covalent attachment to other proteins. Mediates the selective degradation of short-lived and abnormal proteins. In Arabidopsis thaliana (Mouse-ear cress), this protein is Ubiquitin-conjugating enzyme E2 8 (UBC8).